Reading from the N-terminus, the 169-residue chain is Monothiol glutaredoxin-S15, mitochondrial (169 aa).

A mitochondrion-targeting transit peptide spans 1-37 (MAASLSSRLIKGIANLKAVRSSRLTSASVYQNGMMRF). A disordered region spans residues 38–61 (SSTVPSDSDTHDDFKPTQKVPPDS). The 103-residue stretch at 66-168 (KDIVENDVKD…QKLKDVSGNQ (103 aa)) folds into the Glutaredoxin domain. Lys-83 provides a ligand contact to glutathione. Residue Cys-91 participates in [2Fe-2S] cluster binding. Glutathione contacts are provided by residues Lys-120, Phe-132, and 145–146 (SD).

The protein belongs to the glutaredoxin family. CGFS subfamily. [2Fe-2S]-bridged holo-homodimer. Interacts in vitro with SUFE1, BOLA1, BOLA2 and BOLA4. Interacts in vivo only with BOLA4.

The protein resides in the mitochondrion. In terms of biological role, may only reduce GSH-thiol disulfides, but not protein disulfides. Participates probably to the maturation of iron-sulfur proteins and to the regulation of the redox state of the BOLA proteins. In Arabidopsis thaliana (Mouse-ear cress), this protein is Monothiol glutaredoxin-S15, mitochondrial.